The chain runs to 431 residues: Protein prenyltransferase alpha subunit repeat-containing protein 1-B (431 aa).

PFTA repeat units lie at residues 85 to 118 (ELID…TLNP), 120 to 153 (KDLQ…VQEL), 178 to 211 (EEMH…GNLN), 217 to 250 (DELS…LCKT), and 293 to 326 (EEMK…HQLL). Residues 363–383 (PMDVDGMSDPNKQGYTQETKR) form a disordered region. The stretch at 394–431 (SLDSELRFINCVLTNCCSPEQSRFAASYRKWLLSLQGY) is one PFTA 6 repeat.

It belongs to the protein prenyltransferase subunit alpha family.

The chain is Protein prenyltransferase alpha subunit repeat-containing protein 1-B (ptar1-b) from Xenopus laevis (African clawed frog).